A 219-amino-acid polypeptide reads, in one-letter code: Capsid protein (219 aa).

Positions 5–29 (RRRRVVRRRKPVRRLRRRRRRFFKR) are nuclear localization signals.

Belongs to the circoviridae capsid protein family. In terms of assembly, homomultimer. Assembles in the nucleus, presumably in an immature form, then migrates to the cytoplasm once assembled as mature virion. Interacts with Rep; this interaction relocates Rep into the nucleus.

Its subcellular location is the host nucleus. It is found in the virion. In terms of biological role, self-assembles to form the virion icosahedral capsid with a T=1 symmetry. This very small capsid (17-22 nm in diameter) allows the virus to be very stable in the environment and resistant to some disinfectants, including detergents. Essential for the initial attachment to heparan sulfate moieties and chondroitin sulfate B of the host cell surface proteoglycans. After attachment, the virus is endocytosed and traffics to the nucleus. The capsid protein binds and transports the viral genome and Rep across the nuclear envelope. This chain is Capsid protein (Cap), found in Homo sapiens (Human).